The following is a 428-amino-acid chain: Sialidase-3 (428 aa).

An FRIP motif motif is present at residues 24 to 27; it reads YRIP. 2 residues coordinate substrate: arginine 25 and arginine 45. The active-site Proton acceptor is the aspartate 50. Residues 129–140 form a BNR 1 repeat; sequence IYSQDAGCSWSE. Positions 179 and 181 each coordinate substrate. The stretch at 203–214 is one BNR 2 repeat; it reads IYSDDLGVTWHH. Residues glutamate 225 and arginine 245 each contribute to the substrate site. Residues 254-265 form a BNR 3 repeat; it reads ALSTDHGEGFQR. The tract at residues 294–318 is disordered; the sequence is RCQDSSSKDAPTIQQSSPGSSLRLE. Positions 301 to 313 are enriched in polar residues; that stretch reads KDAPTIQQSSPGS. Serine 313 bears the Phosphoserine mark. Arginine 340 is a binding site for substrate. Tyrosine 370 functions as the Nucleophile in the catalytic mechanism. Glutamate 387 is a catalytic residue.

This sequence belongs to the glycosyl hydrolase 33 family. In terms of assembly, interacts with CAV1; this interaction enhances NEU3 sialidase activity within caveola. Interacts with EGFR; this interaction mediates desialylation of EGFR and enhances downstream signaling. Post-translationally, palmitoylated; may regulate intracellular trafficking and anchorage to plasma membrane and endomembranes. In terms of tissue distribution, highly expressed in skeletal muscle, testis, adrenal gland and thymus, followed by pancreas, liver, heart and thymus. Weakly expressed in kidney, placenta, brain and lung.

It localises to the cell membrane. The protein localises to the membrane. It is found in the caveola. The protein resides in the early endosome membrane. Its subcellular location is the recycling endosome membrane. It localises to the lysosome membrane. It catalyses the reaction Hydrolysis of alpha-(2-&gt;3)-, alpha-(2-&gt;6)-, alpha-(2-&gt;8)- glycosidic linkages of terminal sialic acid residues in oligosaccharides, glycoproteins, glycolipids, colominic acid and synthetic substrates.. It carries out the reaction a ganglioside GD1a + H2O = a ganglioside GM1 + N-acetylneuraminate. The enzyme catalyses a ganglioside GD1a (d18:1(4E)) + H2O = a ganglioside GM1 (d18:1(4E)) + N-acetylneuraminate. The catalysed reaction is a ganglioside GD1b + H2O = a ganglioside GM1 + N-acetylneuraminate. It catalyses the reaction a ganglioside GD1b (d18:1(4E)) + H2O = a ganglioside GM1 (d18:1(4E)) + N-acetylneuraminate. It carries out the reaction a ganglioside GD3 + H2O = a ganglioside GM3 + N-acetylneuraminate. The enzyme catalyses a ganglioside GD3 (d18:1(4E)) + H2O = a ganglioside GM3 (d18:1(4E)) + N-acetylneuraminate. The catalysed reaction is a ganglioside GM3 + H2O = a beta-D-galactosyl-(1-&gt;4)-beta-D-glucosyl-(1&lt;-&gt;1)-ceramide + N-acetylneuraminate. It catalyses the reaction a ganglioside GM1 + H2O = a ganglioside GA1 + N-acetylneuraminate. It carries out the reaction a ganglioside GM1 (d18:1(4E)) + H2O = a ganglioside GA1 (d18:1(4E)) + N-acetylneuraminate. The enzyme catalyses a ganglioside GM2 (d18:1(4E)) + H2O = a ganglioside GA2 (d18:1(4E)) + N-acetylneuraminate. The catalysed reaction is a ganglioside GM3 (d18:1(4E)) + H2O = a beta-D-Gal-(1-&gt;4)-beta-D-Glc-(1&lt;-&gt;1)-Cer(d18:1(4E)) + N-acetylneuraminate. It catalyses the reaction a ganglioside GT1b + H2O = a ganglioside GD1b + N-acetylneuraminate. In terms of biological role, exo-alpha-sialidase that catalyzes the hydrolytic cleavage of the terminal sialic acid (N-acetylneuraminic acid, Neu5Ac) of a glycan moiety in the catabolism of glycolipids, glycoproteins and oligosacharides. Displays high catalytic efficiency for gangliosides including alpha-(2-&gt;3)-sialylated GD1a and GM3 and alpha-(2-&gt;8)-sialylated GD3. Plays a role in the regulation of transmembrane signaling through the modulation of ganglioside content of the lipid bilayer and by direct interaction with signaling receptors, such as EGFR. Desialylates EGFR and activates downstream signaling in proliferating cells. Contributes to clathrin-mediated endocytosis by regulating sorting of endocytosed receptors to early and recycling endosomes. The sequence is that of Sialidase-3 (NEU3) from Homo sapiens (Human).